A 45-amino-acid chain; its full sequence is Amphipathic peptide Hj0164 (45 aa).

The first 23 residues, M1–A23, serve as a signal peptide directing secretion. Phenylalanine amide is present on F33. Positions S37–K45 are excised as a propeptide.

Belongs to the non-disulfide-bridged peptide (NDBP) superfamily. Short antimicrobial peptide (group 4) family. As to expression, expressed by the venom gland.

Its subcellular location is the secreted. The protein localises to the target cell membrane. Its function is as follows. Amphipathic peptide that shows antibacterial activities. This Hottentotta judaicus (Black scorpion) protein is Amphipathic peptide Hj0164.